A 281-amino-acid polypeptide reads, in one-letter code: Large ribosomal subunit protein uL2 (281 aa).

Residues 213 to 281 are disordered; that stretch reads RNRHKGIRPT…LIIRRRKESK (69 aa).

This sequence belongs to the universal ribosomal protein uL2 family. In terms of assembly, part of the 50S ribosomal subunit. Forms a bridge to the 30S subunit in the 70S ribosome.

Its function is as follows. One of the primary rRNA binding proteins. Required for association of the 30S and 50S subunits to form the 70S ribosome, for tRNA binding and peptide bond formation. It has been suggested to have peptidyltransferase activity; this is somewhat controversial. Makes several contacts with the 16S rRNA in the 70S ribosome. In Mycoplasmopsis pulmonis (strain UAB CTIP) (Mycoplasma pulmonis), this protein is Large ribosomal subunit protein uL2.